The primary structure comprises 107 residues: Sperm-specific class P protein 31 (107 aa).

Residues 1-107 enclose the MSP domain; that stretch reads MINIDPPSGD…GEVVVKMVAS (107 aa).

Expressed at higher level in testis.

The chain is Sperm-specific class P protein 31 (ssp-31) from Caenorhabditis elegans.